A 259-amino-acid chain; its full sequence is Polycomb group RING finger protein 1 (259 aa).

An N-acetylalanine modification is found at Ala-2. Phosphoserine is present on Ser-3. A Glycyl lysine isopeptide (Lys-Gly) (interchain with G-Cter in SUMO2) cross-link involves residue Lys-24. The RING-type zinc finger occupies 47-86 (CCLCAGYFVDATTITECLHTFCKSCIVKYLQTSKYCPMCN). Positions 86-247 (NIKIHETQPL…LSRWFGKPSP (162 aa)) are necessary for repressor activity. Lys-88 participates in a covalent cross-link: Glycyl lysine isopeptide (Lys-Gly) (interchain with G-Cter in SUMO2). Positions 150-255 (LPFSSFDHSK…SPLLLQYSVK (106 aa)) are required for the interaction with the KDM2B-SKP1 heterodimeric complex. The tract at residues 167-255 (EQLSLCLERL…SPLLLQYSVK (89 aa)) is RING-finger and WD40-associated ubiquitin-like domain (RAWUL); sufficient for interaction with BCOR and BCORL1.

In terms of assembly, interacts with BCORL1, forming heterodimers. The PCGF1-BCORL1 heterodimeric complex interacts with the KDM2B-SKP1 heterodimeric complex to form a homotetrameric polycomb repression complex 1 (PRC1.1). Component of the repressive BCOR complex containing a Polycomb group subcomplex at least composed of RYBP, RING1 and RNF2/RING2. Specifically interacts with BCOR, RING1 and RNF2/RING2. Component of a PRC1-like complex. Interacts with CBX6, CBX7 and CBX8. Interacts with DPPA4, NANOG, POU5F1 and RYBP.

It is found in the nucleus. Component of the Polycomb group (PcG) multiprotein BCOR complex, a complex required to maintain the transcriptionally repressive state of some genes, such as BCL6 and the cyclin-dependent kinase inhibitor, CDKN1A. Transcriptional repressor that may be targeted to the DNA by BCL6; this transcription repressor activity may be related to PKC signaling pathway. Represses CDKN1A expression by binding to its promoter, and this repression is dependent on the retinoic acid response element (RARE element). Promotes cell cycle progression and enhances cell proliferation as well. May have a positive role in tumor cell growth by down-regulating CDKN1A. Component of a Polycomb group (PcG) multiprotein PRC1-like complex, a complex class required to maintain the transcriptionally repressive state of many genes, including Hox genes, throughout development. PcG PRC1 complex acts via chromatin remodeling and modification of histones; it mediates monoubiquitination of histone H2A 'Lys-119', rendering chromatin heritably changed in its expressibility. Within the PRC1-like complex, regulates RNF2 ubiquitin ligase activity. Regulates the expression of DPPA4 and NANOG in the NT2 embryonic carcinoma cells. The protein is Polycomb group RING finger protein 1 (Pcgf1) of Mus musculus (Mouse).